The following is a 375-amino-acid chain: Methylthioribose-1-phosphate isomerase (375 aa).

Asp257 serves as the catalytic Proton donor.

The protein belongs to the eIF-2B alpha/beta/delta subunits family. MtnA subfamily.

The protein localises to the cytoplasm. Its subcellular location is the nucleus. The catalysed reaction is 5-(methylsulfanyl)-alpha-D-ribose 1-phosphate = 5-(methylsulfanyl)-D-ribulose 1-phosphate. The protein operates within amino-acid biosynthesis; L-methionine biosynthesis via salvage pathway; L-methionine from S-methyl-5-thio-alpha-D-ribose 1-phosphate: step 1/6. Functionally, catalyzes the interconversion of methylthioribose-1-phosphate (MTR-1-P) into methylthioribulose-1-phosphate (MTRu-1-P). This chain is Methylthioribose-1-phosphate isomerase, found in Leishmania infantum.